A 94-amino-acid polypeptide reads, in one-letter code: Acylphosphatase (94 aa).

In terms of domain architecture, Acylphosphatase-like spans 8 to 94; the sequence is RLTAWVHGRV…REQITGFHER (87 aa). Residues Arg23 and Asn41 contribute to the active site.

The protein belongs to the acylphosphatase family.

The enzyme catalyses an acyl phosphate + H2O = a carboxylate + phosphate + H(+). In Mycobacterium sp. (strain KMS), this protein is Acylphosphatase (acyP).